The primary structure comprises 374 residues: tRNA (guanine(26)-N(2))-dimethyltransferase (374 aa).

The region spanning 4 to 368 is the Trm1 methyltransferase domain; the sequence is IEATEGTTTF…APLPVLYDAI (365 aa). 5 residues coordinate S-adenosyl-L-methionine: Arg41, Arg66, Asp82, Asp108, and Ala109. Residues Cys237, Cys240, Cys256, and Cys259 each coordinate Zn(2+).

Belongs to the class I-like SAM-binding methyltransferase superfamily. Trm1 family.

The catalysed reaction is guanosine(26) in tRNA + 2 S-adenosyl-L-methionine = N(2)-dimethylguanosine(26) in tRNA + 2 S-adenosyl-L-homocysteine + 2 H(+). In terms of biological role, dimethylates a single guanine residue at position 26 of a number of tRNAs using S-adenosyl-L-methionine as donor of the methyl groups. This is tRNA (guanine(26)-N(2))-dimethyltransferase from Methanoregula boonei (strain DSM 21154 / JCM 14090 / 6A8).